A 299-amino-acid polypeptide reads, in one-letter code: MAEFPASLLILNGKSTDNLPLREAIMLLREEGMTIHVRVTWEKGDAVRFVEEARKLGVATVIAGGGDGTINEVSTALIQCEGDDIPALGILPLGTANDFATSVGIPEALDKALKLAIAGNAIAIDMAQVNKQTCFINMATGGFGTRITTETPEKLKAALGGVSYIIHGLMRMDTLQPDRCEIRGENFHWQGDALVIGIGNGRQAGGGQQLCPNALINDGLLQLRIFTGDEIIPTLVSTLKSDEDNPNIIEGASSWFDIQAPHEITFNLDGEPLSGQNFHIEILPAALRCRLPPDCPLLR.

Residues 2–133 (AEFPASLLIL…IDMAQVNKQT (132 aa)) enclose the DAGKc domain. ATP is bound by residues threonine 40, 66–72 (GDGTINE), and threonine 95. 3 residues coordinate Mg(2+): leucine 215, aspartate 218, and leucine 220. Catalysis depends on glutamate 271, which acts as the Proton acceptor.

Belongs to the diacylglycerol/lipid kinase family. YegS lipid kinase subfamily. It depends on Mg(2+) as a cofactor. The cofactor is Ca(2+).

It is found in the cytoplasm. Its function is as follows. Probably phosphorylates lipids; the in vivo substrate is unknown. The chain is Probable lipid kinase YegS from Escherichia coli O127:H6 (strain E2348/69 / EPEC).